Here is a 280-residue protein sequence, read N- to C-terminus: Acyl-[acyl-carrier-protein]--UDP-N-acetylglucosamine O-acyltransferase (280 aa).

The protein belongs to the transferase hexapeptide repeat family. LpxA subfamily. As to quaternary structure, homotrimer.

The protein localises to the cytoplasm. The enzyme catalyses a (3R)-hydroxyacyl-[ACP] + UDP-N-acetyl-alpha-D-glucosamine = a UDP-3-O-[(3R)-3-hydroxyacyl]-N-acetyl-alpha-D-glucosamine + holo-[ACP]. It functions in the pathway glycolipid biosynthesis; lipid IV(A) biosynthesis; lipid IV(A) from (3R)-3-hydroxytetradecanoyl-[acyl-carrier-protein] and UDP-N-acetyl-alpha-D-glucosamine: step 1/6. In terms of biological role, involved in the biosynthesis of lipid A, a phosphorylated glycolipid that anchors the lipopolysaccharide to the outer membrane of the cell. This is Acyl-[acyl-carrier-protein]--UDP-N-acetylglucosamine O-acyltransferase from Chlamydia trachomatis serovar A (strain ATCC VR-571B / DSM 19440 / HAR-13).